An 87-amino-acid polypeptide reads, in one-letter code: Alpha-toxin To2 (87 aa).

The signal sequence occupies residues 1–20 (MIRFVLFISCFFLIGTVVEC). In terms of domain architecture, LCN-type CS-alpha/beta spans 22-84 (KDGYLMEGDG…IWDSKNNKCG (63 aa)). Disulfide bonds link Cys-32/Cys-83, Cys-36/Cys-58, Cys-44/Cys-64, and Cys-48/Cys-66. Lys-85 carries the lysine amide modification.

In terms of tissue distribution, expressed by the venom gland.

It is found in the secreted. Functionally, alpha toxins bind voltage-independently at site-3 of sodium channels (Nav) and inhibit the inactivation of the activated channels, thereby blocking neuronal transmission. Affects the tetrodotoxin-sensitive sodium current permeability of F-11 rat neuroblastoma cells. Produces a dose dependent increase in amplitude and duration of the current. This Tityus obscurus (Amazonian scorpion) protein is Alpha-toxin To2.